The chain runs to 379 residues: Succinyl-diaminopimelate desuccinylase (379 aa).

H70 lines the Zn(2+) pocket. D72 is an active-site residue. D103 provides a ligand contact to Zn(2+). The active-site Proton acceptor is E137. Zn(2+) is bound by residues E138, E166, and H352.

The protein belongs to the peptidase M20A family. DapE subfamily. Homodimer. The cofactor is Zn(2+). It depends on Co(2+) as a cofactor.

The catalysed reaction is N-succinyl-(2S,6S)-2,6-diaminopimelate + H2O = (2S,6S)-2,6-diaminopimelate + succinate. Its pathway is amino-acid biosynthesis; L-lysine biosynthesis via DAP pathway; LL-2,6-diaminopimelate from (S)-tetrahydrodipicolinate (succinylase route): step 3/3. Functionally, catalyzes the hydrolysis of N-succinyl-L,L-diaminopimelic acid (SDAP), forming succinate and LL-2,6-diaminopimelate (DAP), an intermediate involved in the bacterial biosynthesis of lysine and meso-diaminopimelic acid, an essential component of bacterial cell walls. In Burkholderia cenocepacia (strain HI2424), this protein is Succinyl-diaminopimelate desuccinylase.